The sequence spans 357 residues: Alanine racemase (357 aa).

Lysine 33 (proton acceptor; specific for D-alanine) is an active-site residue. The residue at position 33 (lysine 33) is an N6-(pyridoxal phosphate)lysine. Arginine 129 lines the substrate pocket. The active-site Proton acceptor; specific for L-alanine is tyrosine 253. Methionine 301 provides a ligand contact to substrate.

Belongs to the alanine racemase family. Pyridoxal 5'-phosphate serves as cofactor.

The catalysed reaction is L-alanine = D-alanine. Its pathway is amino-acid biosynthesis; D-alanine biosynthesis; D-alanine from L-alanine: step 1/1. Functionally, catalyzes the interconversion of L-alanine and D-alanine. May also act on other amino acids. The polypeptide is Alanine racemase (alr) (Pseudomonas entomophila (strain L48)).